The chain runs to 1497 residues: ABC multidrug transporter C (1497 aa).

A compositionally biased stretch (polar residues) spans 1 to 13; sequence MSLLGTINPNINP. Residues 1-21 are disordered; it reads MSLLGTINPNINPERTVAGRG. N-linked (GlcNAc...) asparagine glycosylation is found at asparagine 137 and asparagine 336. The 255-residue stretch at 158 to 412 folds into the ABC transporter 1 domain; sequence LEVGTLVRRI…FTNMGFECPE (255 aa). The next 5 helical transmembrane spans lie at 523–543, 557–577, 599–621, 632–652, and 665–685; these read LTMSQLIGNFIMALVIGSVFY, ALLFFAVLLNAFSSALEILTL, AIASMLCDMPYKITNAIIFNLTL, GAFFVFLLFSFVTTLTMSMLF, and ALVPAAILILGLVIYTGFTIP. Residue asparagine 762 is glycosylated (N-linked (GlcNAc...) asparagine). The chain crosses the membrane as a helical span at residues 777-797; sequence GIMFGFMFFFMFTYLTATEYI. Positions 815–843 are disordered; it reads QPTGSHDVEKSPEVSSAAKTDEASSKEAT. In terms of domain architecture, ABC transporter 2 spans 853–1096; the sequence is FQWKDVCYDI…LASYFERNGA (244 aa). ATP is bound at residue 889–896; it reads GVSGAGKT. Helical transmembrane passes span 1192–1212, 1226–1246, 1273–1293, 1313–1333, and 1352–1372; these read YIYSKTALCVLTALYIGFSFF, FSIFMLMTIFGNLVQQIMPNF, IIVELPWNTLMAFLIFVCWYY, LMFLLIWSFLLFTSTFAHMMI, and LCLIFCGVLAPPQSLPGFWIF. N-linked (GlcNAc...) asparagine glycosylation occurs at asparagine 1411. Residues 1464 to 1484 traverse the membrane as a helical segment; the sequence is FGIMWAYIIFNIFAAVFIYWL.

This sequence belongs to the ABC transporter superfamily. ABCG family. PDR (TC 3.A.1.205) subfamily.

It localises to the cell membrane. It catalyses the reaction fluconazole(in) + ATP + H2O = fluconazole(out) + ADP + phosphate + H(+). The enzyme catalyses itraconazole(in) + ATP + H2O = itraconazole(out) + ADP + phosphate + H(+). The catalysed reaction is voriconazole(in) + ATP + H2O = voriconazole(out) + ADP + phosphate + H(+). Its activity is regulated as follows. The efflux inhibitor FK506 impairs the transport activity. In terms of biological role, pleiotropic ABC efflux transporter that shows a strong substrate specificity for the azole class of drugs such as lotrimazole (CLT), fluconazole (FLC), itraconazole (ITC), ketoconazole (KTC), posaconazole (POS), tebuconazole (TEBZ), and voriconazole (VRC). Is also able to transport rhodamine 6G (R-6G), a known substrate for many ABC transporters. Required for normal pathogenesis in a Galleria mellonella (greater wax moth) infection model. This is ABC multidrug transporter C from Aspergillus fumigatus (strain ATCC MYA-4609 / CBS 101355 / FGSC A1100 / Af293) (Neosartorya fumigata).